The chain runs to 400 residues: LIM/homeobox protein Lhx3 (400 aa).

LIM zinc-binding domains lie at 34 to 84 and 93 to 147; these read CAGC…CKDD and CAAC…CKAD. Phosphoserine is present on S74. Positions 160–219 form a DNA-binding region, homeobox; sequence AKRPRTTITAKQLETLKSAYNTSPKPARHVREQLSSETGLDMRVVQVWFQNRRAKEKRLK. 2 disordered regions span residues 215–280 and 297–400; these read EKRL…SSLG and TLDH…HAQF. Position 230 is a phosphotyrosine (Y230). Phosphoserine is present on residues S237 and S241. Pro residues-rich tracts occupy residues 319–334 and 352–361; these read GIPP…PGPQ and SGPPGGPPPM. A compositionally biased stretch (polar residues) spans 368–380; it reads GPSSDLSTESSSG.

As to quaternary structure, interacts with POU1F1. At neuronal promoters, interacts with LDB1, in motor neurons LDB1 is displaced by ISL1 and a ternary complex is formed in which ISL1 contacts both LHX3 and LDB1; allosteric structural changes in the DNA binding domain of LHX3, induced by the ISL1-LHX3 interaction, may explain differences in sequence specificity of the different complexes. Interacts with LDB2. May interact with CITED2/MRG1. Mostly expressed in the pituitary anterior and intermediate lobes. It is also expressed in the pineal gland and transiently in the primordia of motor neurons including the spinal cord, pons and medulla oblongata.

The protein localises to the nucleus. Transcription factor. Recognizes and binds to the consensus sequence motif 5'-AATTAATTA-3' in the regulatory elements of target genes, such as glycoprotein hormones alpha chain CGA and visual system homeobox CHX10, positively modulating transcription; transcription can be co-activated by LDB2. Synergistically enhances transcription from the prolactin promoter in cooperation with POU1F1/Pit-1. Required for the establishment of the specialized cells of the pituitary gland and the nervous system. Involved in the development of interneurons and motor neurons in cooperation with LDB1 and ISL1. The sequence is that of LIM/homeobox protein Lhx3 (Lhx3) from Mus musculus (Mouse).